A 226-amino-acid chain; its full sequence is NADH-ubiquinone oxidoreductase chain 6 (226 aa).

5 helical membrane passes run 2–22 (STLGLLIMLLGIIIMCTLVIL), 28–48 (IYSILNLIVIYGCYASILLTV), 56–76 (IYILVNVGAIAVLFLFIVMMI), 90–110 (YNIYMIVGIIGVVGLLGILIT), and 169–189 (IWFIMACIILLIGMVGVIYIT).

Belongs to the complex I subunit 6 family.

The protein localises to the mitochondrion membrane. The enzyme catalyses a ubiquinone + NADH + 5 H(+)(in) = a ubiquinol + NAD(+) + 4 H(+)(out). Functionally, core subunit of the mitochondrial membrane respiratory chain NADH dehydrogenase (Complex I) that is believed to belong to the minimal assembly required for catalysis. Complex I functions in the transfer of electrons from NADH to the respiratory chain. The immediate electron acceptor for the enzyme is believed to be ubiquinone. The protein is NADH-ubiquinone oxidoreductase chain 6 (nad6) of Dictyostelium discoideum (Social amoeba).